A 367-amino-acid polypeptide reads, in one-letter code: 3-methyl-2-oxobutanoate dehydrogenase subunit alpha (367 aa).

Thiamine diphosphate is bound by residues glutamine 99–arginine 101, proline 141–isoleucine 142, glycine 170–glutamate 176, asparagine 200–isoleucine 204, and histidine 269. Tyrosine 100 provides a ligand contact to substrate. Mg(2+)-binding residues include aspartate 171 and asparagine 200.

Heteromer of E1 alpha (BkdA) and beta (BkdB) subunits. Part of the BCKADH complex, consisting of multiple copies of BkdA/BkdB (E1), BkdC (E2) and Lpd (E3). Mg(2+) is required as a cofactor. Thiamine diphosphate serves as cofactor.

It catalyses the reaction N(6)-[(R)-lipoyl]-L-lysyl-[protein] + 3-methyl-2-oxobutanoate + H(+) = N(6)-[(R)-S(8)-2-methylpropanoyldihydrolipoyl]-L-lysyl-[protein] + CO2. Its function is as follows. Component of the branched-chain alpha-ketoacid dehydrogenase (BCKADH) complex, that catalyzes the overall conversion of branched-chain alpha-ketoacids to acyl-CoA and CO(2). The sequence is that of 3-methyl-2-oxobutanoate dehydrogenase subunit alpha (bkdA) from Mycobacterium tuberculosis (strain CDC 1551 / Oshkosh).